The sequence spans 212 residues: Pyridoxine/pyridoxamine 5'-phosphate oxidase (212 aa).

FMN-binding positions include 61 to 66, 76 to 77, Lys83, and Gln105; these read RSVLLK and YT. Position 66 (Lys66) interacts with substrate. Substrate contacts are provided by Tyr123, Arg127, and Ser131. Residues 140–141 and Trp185 each bind FMN; that span reads QS. 191–193 contacts substrate; the sequence is RLH. Arg195 contacts FMN.

Belongs to the pyridoxamine 5'-phosphate oxidase family. Homodimer. It depends on FMN as a cofactor.

It catalyses the reaction pyridoxamine 5'-phosphate + O2 + H2O = pyridoxal 5'-phosphate + H2O2 + NH4(+). It carries out the reaction pyridoxine 5'-phosphate + O2 = pyridoxal 5'-phosphate + H2O2. Its pathway is cofactor metabolism; pyridoxal 5'-phosphate salvage; pyridoxal 5'-phosphate from pyridoxamine 5'-phosphate: step 1/1. The protein operates within cofactor metabolism; pyridoxal 5'-phosphate salvage; pyridoxal 5'-phosphate from pyridoxine 5'-phosphate: step 1/1. Functionally, catalyzes the oxidation of either pyridoxine 5'-phosphate (PNP) or pyridoxamine 5'-phosphate (PMP) into pyridoxal 5'-phosphate (PLP). In Dichelobacter nodosus (strain VCS1703A), this protein is Pyridoxine/pyridoxamine 5'-phosphate oxidase.